Reading from the N-terminus, the 58-residue chain is UPF0391 membrane protein GM21_0108 (58 aa).

The next 2 helical transmembrane spans lie at 4–24 (WALIFFIIAIIAAVFGFGGIA) and 33–53 (VLFYLFLVVAVVMLVSALLAG).

The protein belongs to the UPF0391 family.

The protein resides in the cell membrane. This chain is UPF0391 membrane protein GM21_0108, found in Geobacter sp. (strain M21).